Consider the following 273-residue polypeptide: Large ribosomal subunit protein uL29m (273 aa).

A compositionally biased stretch (basic and acidic residues) spans 247-258 (PLRHDRWEKGQE). The disordered stretch occupies residues 247–273 (PLRHDRWEKGQEENSGGETEDGNAPSN).

The protein belongs to the universal ribosomal protein uL29 family. Component of the mitochondrial large ribosomal subunit. Mature mitochondrial ribosomes consist of a small (37S) and a large (54S) subunit. The 37S subunit contains at least 33 different proteins and 1 molecule of RNA (15S). The 54S subunit contains at least 45 different proteins and 1 molecule of RNA (21S).

The protein localises to the mitochondrion. This chain is Large ribosomal subunit protein uL29m (mrpl4), found in Aspergillus niger (strain ATCC MYA-4892 / CBS 513.88 / FGSC A1513).